A 433-amino-acid polypeptide reads, in one-letter code: Enolase (433 aa).

Residue glutamine 164 coordinates (2R)-2-phosphoglycerate. The active-site Proton donor is the glutamate 206. Positions 243, 289, and 316 each coordinate Mg(2+). (2R)-2-phosphoglycerate-binding residues include lysine 341, arginine 370, serine 371, and lysine 392. The Proton acceptor role is filled by lysine 341.

This sequence belongs to the enolase family. Mg(2+) serves as cofactor.

It is found in the cytoplasm. Its subcellular location is the secreted. The protein localises to the cell surface. It catalyses the reaction (2R)-2-phosphoglycerate = phosphoenolpyruvate + H2O. Its pathway is carbohydrate degradation; glycolysis; pyruvate from D-glyceraldehyde 3-phosphate: step 4/5. Catalyzes the reversible conversion of 2-phosphoglycerate (2-PG) into phosphoenolpyruvate (PEP). It is essential for the degradation of carbohydrates via glycolysis. The chain is Enolase from Borrelia hermsii (strain HS1 / DAH).